The following is a 201-amino-acid chain: MSRYTGPKWKLSRRLGISLSGTGKELARRPYAPGQHGNDRRGKISEYGMQLSEKQKLRLMYGLTERQFRNLFARAGKIREGKHGVNLMILLEQRLDNIVYRLGLASTRAQARQLVNHGHVTVDGKRVDIPSYEVKPGQEISIREKSKNLVIIKDAIEGTVGRPSFVEFDADNLKGSLVRLPERSELEPEIDEALIVEFYNR.

The region spanning 93-153 (QRLDNIVYRL…EKSKNLVIIK (61 aa)) is the S4 RNA-binding domain.

Belongs to the universal ribosomal protein uS4 family. As to quaternary structure, part of the 30S ribosomal subunit. Contacts protein S5. The interaction surface between S4 and S5 is involved in control of translational fidelity.

In terms of biological role, one of the primary rRNA binding proteins, it binds directly to 16S rRNA where it nucleates assembly of the body of the 30S subunit. Functionally, with S5 and S12 plays an important role in translational accuracy. This is Small ribosomal subunit protein uS4 from Latilactobacillus sakei subsp. sakei (strain 23K) (Lactobacillus sakei subsp. sakei).